The primary structure comprises 504 residues: MXXXXGYLEFDGARQQSFLYPFFFREYIYVLAYDHRLNRLNRNRSIFLENADFDKNYSSLIVKRLILRMYEQNRLIIPTKDLNQNPFFGHTNLFYYQMISVLFAVIVEIQFSLRLGSSFEGKQLKKSYNLQSIHSIFPFLEDKLTHFNYVLDVLIPYPIHLEILVQTLRYRVKDASSLHFFRFCLYEYCNWNNLDIKKKSILNPIFFLFLYNSHVCEYESIFFFLRKRSSHLRSTSYKVLFERIFFYGKIQHFLKVFVNNFPASLGLLKDPFLHYVXYHGKFILATKDTPLLMNKWKYYFVNLWQCYFSVWFQSQKVNINQLSKDNLDFLGYLSSLRLNPLVVRSQMLENSFLIDNVRIKLDSKIPISSIIGSLAKDKFCNVLGHPISKATWTDSSDSYILNRFVRICRNISHYYSGSEKKKNLYRIKYILRLCCVKTLARKHKSTVRAFLKRLGSGLLEEFLTGEGQVLSLIFPRSYYASKRLYRVRIWYLDILYLNDLVNHE.

This sequence belongs to the intron maturase 2 family. MatK subfamily.

The protein localises to the plastid. Its subcellular location is the chloroplast. Usually encoded in the trnK tRNA gene intron. Probably assists in splicing its own and other chloroplast group II introns. In Alliaria petiolata (Garlic mustard), this protein is Maturase K.